The chain runs to 427 residues: Glutamate-1-semialdehyde 2,1-aminomutase (427 aa).

An N6-(pyridoxal phosphate)lysine modification is found at lysine 265.

Belongs to the class-III pyridoxal-phosphate-dependent aminotransferase family. HemL subfamily. As to quaternary structure, homodimer. It depends on pyridoxal 5'-phosphate as a cofactor.

It localises to the cytoplasm. It carries out the reaction (S)-4-amino-5-oxopentanoate = 5-aminolevulinate. The protein operates within porphyrin-containing compound metabolism; protoporphyrin-IX biosynthesis; 5-aminolevulinate from L-glutamyl-tRNA(Glu): step 2/2. The protein is Glutamate-1-semialdehyde 2,1-aminomutase of Bordetella bronchiseptica (strain ATCC BAA-588 / NCTC 13252 / RB50) (Alcaligenes bronchisepticus).